Consider the following 274-residue polypeptide: MILEKISDPQKYISHHLSHLQIDLRSFKIIQPGALSSDYWTVNVDSMFFSLVLGSFFLSIFYMVGKKITQGIPGKLQTAIELIFEFVNLNVKSMYQGKNALIAPLSLTVFIWVFLMNLMDLVPIDFFPFISEKVFELPAMRIVPSADINITLSMSLGVFFLILFYTVKIKGYVGFLKELILQPFNHPVFSIFNFILEFVSLVSKPISLGLRLFGNMYAGEMIFILIAGLLPWWTQCFLNVPWAIFHILIISLQAFIFMVLTIVYLSMASQSHKD.

The next 5 helical transmembrane spans lie at 44 to 64, 110 to 130, 142 to 164, 212 to 232, and 243 to 263; these read VDSM…FYMV, FIWV…FPFI, IVPS…LILF, LFGN…LLPW, and AIFH…LTIV.

Belongs to the ATPase A chain family. F-type ATPases have 2 components, CF(1) - the catalytic core - and CF(0) - the membrane proton channel. CF(1) has five subunits: alpha(3), beta(3), gamma(1), delta(1), epsilon(1). CF(0) has three main subunits: a(1), b(2) and c(9-12). The alpha and beta chains form an alternating ring which encloses part of the gamma chain. CF(1) is attached to CF(0) by a central stalk formed by the gamma and epsilon chains, while a peripheral stalk is formed by the delta and b chains.

The protein resides in the cell membrane. Key component of the proton channel; it plays a direct role in the translocation of protons across the membrane. The protein is ATP synthase subunit a of Buchnera aphidicola subsp. Acyrthosiphon pisum (strain APS) (Acyrthosiphon pisum symbiotic bacterium).